Here is a 361-residue protein sequence, read N- to C-terminus: Peptide chain release factor 1 (361 aa).

Gln240 is modified (N5-methylglutamine).

Belongs to the prokaryotic/mitochondrial release factor family. Methylated by PrmC. Methylation increases the termination efficiency of RF1.

It is found in the cytoplasm. In terms of biological role, peptide chain release factor 1 directs the termination of translation in response to the peptide chain termination codons UAG and UAA. This chain is Peptide chain release factor 1, found in Mycobacterium leprae (strain Br4923).